A 160-amino-acid polypeptide reads, in one-letter code: SsrA-binding protein (160 aa).

The interval 132–160 is disordered; the sequence is KEFDKRDTMRERDSNRELQRAVRNKGKEE.

Belongs to the SmpB family.

The protein localises to the cytoplasm. Required for rescue of stalled ribosomes mediated by trans-translation. Binds to transfer-messenger RNA (tmRNA), required for stable association of tmRNA with ribosomes. tmRNA and SmpB together mimic tRNA shape, replacing the anticodon stem-loop with SmpB. tmRNA is encoded by the ssrA gene; the 2 termini fold to resemble tRNA(Ala) and it encodes a 'tag peptide', a short internal open reading frame. During trans-translation Ala-aminoacylated tmRNA acts like a tRNA, entering the A-site of stalled ribosomes, displacing the stalled mRNA. The ribosome then switches to translate the ORF on the tmRNA; the nascent peptide is terminated with the 'tag peptide' encoded by the tmRNA and targeted for degradation. The ribosome is freed to recommence translation, which seems to be the essential function of trans-translation. This is SsrA-binding protein from Pseudomonas putida (strain ATCC 47054 / DSM 6125 / CFBP 8728 / NCIMB 11950 / KT2440).